We begin with the raw amino-acid sequence, 179 residues long: MVAATVNLANMTWTSLNSNPAISFSMLSGIRNLGMLPFRRCLKPTVIGIASWPPLRCSSVKAMSSSSSSSGSTLEETVKTTVAENPVVVYSKTWCSYSSQVKSLFKSLQVEPLVVELDQLGSEGSQLQNVLEKITGQYTVPNVFIGGKHIGGCSDTLQLHNKGELEAILAEANGKNGQT.

A chloroplast-targeting transit peptide spans 1 to 61 (MVAATVNLAN…WPPLRCSSVK (61 aa)). A62 is subject to N-acetylalanine. Residues 75-176 (EETVKTTVAE…AILAEANGKN (102 aa)) form the Glutaredoxin domain. C95 is a [2Fe-2S] cluster binding site.

The protein belongs to the glutaredoxin family. CPYC subfamily.

Its subcellular location is the plastid. The protein resides in the chloroplast. In terms of biological role, may only reduce GSH-thiol disulfides, but not protein disulfides. The polypeptide is Monothiol glutaredoxin-S12, chloroplastic (GRXS12) (Arabidopsis thaliana (Mouse-ear cress)).